The primary structure comprises 668 residues: Transketolase 1 (668 aa).

His26 is a binding site for substrate. Thiamine diphosphate is bound by residues His66 and 114-116; that span reads GPL. Asp155 is a Mg(2+) binding site. Thiamine diphosphate is bound by residues Gly156 and Asn185. Mg(2+)-binding residues include Asn185 and Ile187. Substrate contacts are provided by His261, Arg358, and Ser385. A thiamine diphosphate-binding site is contributed by His261. Glu413 functions as the Proton donor in the catalytic mechanism. Phe439 contacts thiamine diphosphate. Residues His463, Asp471, and Arg522 each contribute to the substrate site.

The protein belongs to the transketolase family. In terms of assembly, homodimer. Requires Mg(2+) as cofactor. The cofactor is Ca(2+). Mn(2+) serves as cofactor. Co(2+) is required as a cofactor. It depends on thiamine diphosphate as a cofactor.

It carries out the reaction D-sedoheptulose 7-phosphate + D-glyceraldehyde 3-phosphate = aldehydo-D-ribose 5-phosphate + D-xylulose 5-phosphate. In terms of biological role, catalyzes the transfer of a two-carbon ketol group from a ketose donor to an aldose acceptor, via a covalent intermediate with the cofactor thiamine pyrophosphate. This is Transketolase 1 (tktA) from Pasteurella multocida (strain Pm70).